Here is a 118-residue protein sequence, read N- to C-terminus: Ribulose bisphosphate carboxylase small subunit (118 aa).

Belongs to the RuBisCO small chain family. As to quaternary structure, heterohexadecamer of 8 large and 8 small subunits.

Functionally, ruBisCO catalyzes two reactions: the carboxylation of D-ribulose 1,5-bisphosphate, the primary event in carbon dioxide fixation, as well as the oxidative fragmentation of the pentose substrate. Both reactions occur simultaneously and in competition at the same active site. Although the small subunit is not catalytic it is essential for maximal activity. This Thiobacillus denitrificans (strain ATCC 25259 / T1) protein is Ribulose bisphosphate carboxylase small subunit.